A 427-amino-acid chain; its full sequence is Glutamate-1-semialdehyde 2,1-aminomutase (427 aa).

Residue Lys265 is modified to N6-(pyridoxal phosphate)lysine.

This sequence belongs to the class-III pyridoxal-phosphate-dependent aminotransferase family. HemL subfamily. As to quaternary structure, homodimer. Pyridoxal 5'-phosphate serves as cofactor.

The protein localises to the cytoplasm. It carries out the reaction (S)-4-amino-5-oxopentanoate = 5-aminolevulinate. It functions in the pathway porphyrin-containing compound metabolism; protoporphyrin-IX biosynthesis; 5-aminolevulinate from L-glutamyl-tRNA(Glu): step 2/2. This is Glutamate-1-semialdehyde 2,1-aminomutase from Colwellia psychrerythraea (strain 34H / ATCC BAA-681) (Vibrio psychroerythus).